The chain runs to 464 residues: Protein FAM90A14 (464 aa).

Disordered stretches follow at residues 1–42 (MMAR…DPRL), 70–389 (PATL…HDGA), and 411–437 (APSF…SEAP). 2 stretches are compositionally biased toward basic and acidic residues: residues 74–89 (GKKE…KPRV) and 97–114 (NKDK…DPQR). Over residues 180–197 (LASLSPLRKASLSSSSSL) the composition is skewed to low complexity.

This sequence belongs to the FAM90 family.

In Homo sapiens (Human), this protein is Protein FAM90A14.